The following is a 2264-amino-acid chain: Protein Ycf2 (2264 aa).

1611 to 1618 (GSIGTGRS) provides a ligand contact to ATP.

The protein belongs to the Ycf2 family.

The protein localises to the plastid. The protein resides in the chloroplast stroma. In terms of biological role, probable ATPase of unknown function. Its presence in a non-photosynthetic plant (Epifagus virginiana) and experiments in tobacco indicate that it has an essential function which is probably not related to photosynthesis. The polypeptide is Protein Ycf2 (Lactuca sativa (Garden lettuce)).